We begin with the raw amino-acid sequence, 140 residues long: Large ribosomal subunit protein uL11 (140 aa).

This sequence belongs to the universal ribosomal protein uL11 family. In terms of assembly, part of the ribosomal stalk of the 50S ribosomal subunit. Interacts with L10 and the large rRNA to form the base of the stalk. L10 forms an elongated spine to which L12 dimers bind in a sequential fashion forming a multimeric L10(L12)X complex. One or more lysine residues are methylated.

Forms part of the ribosomal stalk which helps the ribosome interact with GTP-bound translation factors. This is Large ribosomal subunit protein uL11 from Nitratidesulfovibrio vulgaris (strain ATCC 29579 / DSM 644 / CCUG 34227 / NCIMB 8303 / VKM B-1760 / Hildenborough) (Desulfovibrio vulgaris).